Here is a 126-residue protein sequence, read N- to C-terminus: Glycine cleavage system H protein (126 aa).

The region spanning 21–103 (TATIGISEHA…YEGGWIVKVK (83 aa)) is the Lipoyl-binding domain. N6-lipoyllysine is present on Lys62.

It belongs to the GcvH family. As to quaternary structure, the glycine cleavage system is composed of four proteins: P, T, L and H. (R)-lipoate is required as a cofactor.

Its function is as follows. The glycine cleavage system catalyzes the degradation of glycine. The H protein shuttles the methylamine group of glycine from the P protein to the T protein. This chain is Glycine cleavage system H protein, found in Vibrio campbellii (strain ATCC BAA-1116).